The primary structure comprises 154 residues: Lipoprotein signal peptidase (154 aa).

3 helical membrane-spanning segments follow: residues 7 to 27 (VLYL…KNYI), 58 to 78 (IFSG…AVVV), and 88 to 108 (NWLF…NFID). Active-site residues include Asp-117 and Asp-133. The chain crosses the membrane as a helical span at residues 128–148 (IFNIADSAITVGIVLVFIYLI).

Belongs to the peptidase A8 family.

The protein localises to the cell membrane. The catalysed reaction is Release of signal peptides from bacterial membrane prolipoproteins. Hydrolyzes -Xaa-Yaa-Zaa-|-(S,diacylglyceryl)Cys-, in which Xaa is hydrophobic (preferably Leu), and Yaa (Ala or Ser) and Zaa (Gly or Ala) have small, neutral side chains.. It participates in protein modification; lipoprotein biosynthesis (signal peptide cleavage). In terms of biological role, this protein specifically catalyzes the removal of signal peptides from prolipoproteins. This Lactobacillus gasseri (strain ATCC 33323 / DSM 20243 / BCRC 14619 / CIP 102991 / JCM 1131 / KCTC 3163 / NCIMB 11718 / NCTC 13722 / AM63) protein is Lipoprotein signal peptidase.